We begin with the raw amino-acid sequence, 307 residues long: MAEHYEALESKIGAPYYAKKAEKLISCAEYLSFKRDPETGKLKLYQAHFCKVRLCPMCAWRRSLKIAYHNKLIVEEANRQYGCGWIFLTLTVRNVKGERLKPQISEMMEGFRKLFQYKKVKTSVLGFFRALEITKNHEEDTYHPHFHVLIPVRKNYFGKNYIKQAEWTSLWKKAMKLDYTPIVDIRRVKGKAKIDAELIENDVREAMMEQKAVLEISKYPVKDTDVVRGNKVTEDNLNTVLYLDDALAARRLIGYRGILKEIHKELNLGDAEDGDLVKIRKKMTRLQMVHLRLWLIGILHIKNYIIK.

DNA is bound at residue Y219.

This sequence belongs to the Gram-positive plasmids replication protein type 1 family.

The sequence is that of Protein rep (repA) from Bacillus sp.